The chain runs to 76 residues: Large ribosomal subunit protein bL31 (76 aa).

Positions 16, 18, 37, and 40 each coordinate Zn(2+).

This sequence belongs to the bacterial ribosomal protein bL31 family. Type A subfamily. Part of the 50S ribosomal subunit. Zn(2+) is required as a cofactor.

In terms of biological role, binds the 23S rRNA. The sequence is that of Large ribosomal subunit protein bL31 from Maridesulfovibrio salexigens (strain ATCC 14822 / DSM 2638 / NCIMB 8403 / VKM B-1763) (Desulfovibrio salexigens).